The sequence spans 122 residues: Ribosome-binding factor A (122 aa).

It belongs to the RbfA family. In terms of assembly, monomer. Binds 30S ribosomal subunits, but not 50S ribosomal subunits or 70S ribosomes.

The protein localises to the cytoplasm. Functionally, one of several proteins that assist in the late maturation steps of the functional core of the 30S ribosomal subunit. Associates with free 30S ribosomal subunits (but not with 30S subunits that are part of 70S ribosomes or polysomes). Required for efficient processing of 16S rRNA. May interact with the 5'-terminal helix region of 16S rRNA. This Pelobacter propionicus (strain DSM 2379 / NBRC 103807 / OttBd1) protein is Ribosome-binding factor A.